The sequence spans 91 residues: Large ribosomal subunit protein bL27 (91 aa).

The tract at residues 1-26 is disordered; that stretch reads MAHKKGVGSSRNGRDSNPKMRGVKRF.

Belongs to the bacterial ribosomal protein bL27 family.

The sequence is that of Large ribosomal subunit protein bL27 from Chloroflexus aurantiacus (strain ATCC 29366 / DSM 635 / J-10-fl).